The primary structure comprises 315 residues: MEPEAGTNRTAVAEFILLGLVQTEEMQPVVFVLFLFAYLVTIGGNLSILAAILVEPKLHAPMYFFLGNLSVLDVGCITVTVPAMLGRLLSHKSTISYDACLSQLFFFHLLAGMDCFLLTAMAYDRFLAICWPLTYSTRMSQTVQRMLVAASWACAFTNALTHTVAMSTLNFCGPNEVNHFYCDLPQLFQLSCSSTQLNELLLFAVGFIMAGTPLVLIITSYSHVAAAVLRIRSVEGWKKAFSTCGSHLTVVCLFFGTGIFNYMRLGSEEASDKDKGVGVFNTVINPMLNPLIYSLRNPDVQGALWRIFLGRRSLT.

The Extracellular portion of the chain corresponds to 1–29 (MEPEAGTNRTAVAEFILLGLVQTEEMQPV). Asn8 is a glycosylation site (N-linked (GlcNAc...) asparagine). The helical transmembrane segment at 30–52 (VFVLFLFAYLVTIGGNLSILAAI) threads the bilayer. At 53-60 (LVEPKLHA) the chain is on the cytoplasmic side. The helical transmembrane segment at 61 to 82 (PMYFFLGNLSVLDVGCITVTVP) threads the bilayer. The Extracellular segment spans residues 83 to 103 (AMLGRLLSHKSTISYDACLSQ). The cysteines at positions 100 and 192 are disulfide-linked. Residues 104–123 (LFFFHLLAGMDCFLLTAMAY) traverse the membrane as a helical segment. Topologically, residues 124–143 (DRFLAICWPLTYSTRMSQTV) are cytoplasmic. The helical transmembrane segment at 144–161 (QRMLVAASWACAFTNALT) threads the bilayer. The Extracellular portion of the chain corresponds to 162-199 (HTVAMSTLNFCGPNEVNHFYCDLPQLFQLSCSSTQLNE). A helical transmembrane segment spans residues 200–223 (LLLFAVGFIMAGTPLVLIITSYSH). The Cytoplasmic segment spans residues 224 to 240 (VAAAVLRIRSVEGWKKA). The helical transmembrane segment at 241-264 (FSTCGSHLTVVCLFFGTGIFNYMR) threads the bilayer. Over 265–275 (LGSEEASDKDK) the chain is Extracellular. A helical membrane pass occupies residues 276–295 (GVGVFNTVINPMLNPLIYSL). The Cytoplasmic segment spans residues 296–315 (RNPDVQGALWRIFLGRRSLT).

This sequence belongs to the G-protein coupled receptor 1 family.

Its subcellular location is the cell membrane. Odorant receptor. This is Olfactory receptor 3A2 (OR3A2) from Pan troglodytes (Chimpanzee).